Consider the following 296-residue polypeptide: NADH-ubiquinone oxidoreductase chain 2 (296 aa).

The next 8 helical transmembrane spans lie at 5-25, 49-69, 71-91, 114-134, 167-187, 209-229, 242-262, and 276-296; these read LCLF…GLWL, YFLI…NQSF, FLIP…MWLV, LLGL…SAFI, FFLM…AVIL, ASIS…GFFI, LLVL…FSIA, and KMEI…LFFL.

Belongs to the complex I subunit 2 family.

The protein localises to the mitochondrion inner membrane. The catalysed reaction is a ubiquinone + NADH + 5 H(+)(in) = a ubiquinol + NAD(+) + 4 H(+)(out). In terms of biological role, core subunit of the mitochondrial membrane respiratory chain NADH dehydrogenase (Complex I) that is believed to belong to the minimal assembly required for catalysis. Complex I functions in the transfer of electrons from NADH to the respiratory chain. The immediate electron acceptor for the enzyme is believed to be ubiquinone. The sequence is that of NADH-ubiquinone oxidoreductase chain 2 (ND2) from Artemia franciscana (Brine shrimp).